Consider the following 95-residue polypeptide: Aspartyl/glutamyl-tRNA(Asn/Gln) amidotransferase subunit C (95 aa).

Belongs to the GatC family. In terms of assembly, heterotrimer of A, B and C subunits.

The enzyme catalyses L-glutamyl-tRNA(Gln) + L-glutamine + ATP + H2O = L-glutaminyl-tRNA(Gln) + L-glutamate + ADP + phosphate + H(+). It catalyses the reaction L-aspartyl-tRNA(Asn) + L-glutamine + ATP + H2O = L-asparaginyl-tRNA(Asn) + L-glutamate + ADP + phosphate + 2 H(+). Allows the formation of correctly charged Asn-tRNA(Asn) or Gln-tRNA(Gln) through the transamidation of misacylated Asp-tRNA(Asn) or Glu-tRNA(Gln) in organisms which lack either or both of asparaginyl-tRNA or glutaminyl-tRNA synthetases. The reaction takes place in the presence of glutamine and ATP through an activated phospho-Asp-tRNA(Asn) or phospho-Glu-tRNA(Gln). The polypeptide is Aspartyl/glutamyl-tRNA(Asn/Gln) amidotransferase subunit C (Bartonella henselae (strain ATCC 49882 / DSM 28221 / CCUG 30454 / Houston 1) (Rochalimaea henselae)).